Here is an 834-residue protein sequence, read N- to C-terminus: Serine/threonine-protein kinase TNNI3K (834 aa).

Gly-2 carries the N-myristoyl glycine lipid modification. Residues 21–49 are a coiled coil; that stretch reads SESYAIIIERLEDDLQIKENEFQELRHIF. 10 ANK repeats span residues 66 to 96, 100 to 129, 133 to 162, 166 to 195, 199 to 229, 233 to 262, 268 to 297, 303 to 334, 338 to 367, and 380 to 409; these read RGLS…RPSR, NGFP…DVQQ, GGLT…NVNV, VFFT…DVNV, VGDR…DVNA, EDHV…EVQP, YGDT…TESL, FSET…NINH, DGHT…DMNL, and DEQT…PQDE. The Protein kinase domain occupies 462–722; sequence IEFHEIIGSG…EVVRKLEECL (261 aa). ATP-binding positions include 468 to 476 and Lys-489; that span reads IGSGSFGKV. The active-site Proton acceptor is the Asp-587. The segment at 815–834 is disordered; the sequence is PMSPMHLHSRRNSGSFEDGN.

It belongs to the protein kinase superfamily. TKL Ser/Thr protein kinase family. MAP kinase kinase kinase subfamily. Interacts with TNNI3, ACTC, ACTA1, MYBPC3, AIP, FABP3 and HADHB. The cofactor is Mg(2+). Post-translationally, autophosphorylated.

The protein localises to the nucleus. The protein resides in the cytoplasm. It carries out the reaction L-seryl-[protein] + ATP = O-phospho-L-seryl-[protein] + ADP + H(+). It catalyses the reaction L-threonyl-[protein] + ATP = O-phospho-L-threonyl-[protein] + ADP + H(+). May play a role in cardiac physiology. The polypeptide is Serine/threonine-protein kinase TNNI3K (Mus musculus (Mouse)).